The primary structure comprises 267 residues: Thiamine pyrophosphokinase 1 (267 aa).

This sequence belongs to the thiamine pyrophosphokinase family. As to expression, expressed in roots, leaves and flowers.

The protein localises to the cytoplasm. It localises to the cytosol. It carries out the reaction thiamine + ATP = thiamine diphosphate + AMP + H(+). It participates in cofactor biosynthesis; thiamine diphosphate biosynthesis; thiamine diphosphate from thiamine: step 1/1. Functionally, catalyzes the phosphorylation of thiamine to thiamine pyrophosphate (TPP). TPP is an active cofactor for enzymes involved in glycolysis and energy production. Plant leaves require high levels of TPP for photosynthesis and carbohydrate metabolism. In Arabidopsis thaliana (Mouse-ear cress), this protein is Thiamine pyrophosphokinase 1.